Here is a 492-residue protein sequence, read N- to C-terminus: Catalase isozyme 2 (492 aa).

The segment at 1 to 32 (MDPYKFRPSSSNDTPFWTTNAGDPVSNNNSSM) is disordered. Residues 8–32 (PSSSNDTPFWTTNAGDPVSNNNSSM) show a composition bias toward polar residues. Active-site residues include histidine 65 and asparagine 138. Position 348 (tyrosine 348) interacts with heme.

The protein belongs to the catalase family. As to quaternary structure, homotetramer. Heme serves as cofactor. As to expression, abundant in hypocotyls and roots. Low levels are seen in the endosperms and cotyledons.

It localises to the peroxisome. The protein resides in the glyoxysome. It catalyses the reaction 2 H2O2 = O2 + 2 H2O. Functionally, occurs in almost all aerobically respiring organisms and serves to protect cells from the toxic effects of hydrogen peroxide. This Ricinus communis (Castor bean) protein is Catalase isozyme 2 (CAT2).